Consider the following 354-residue polypeptide: MELKTSYASDNYPIIVKHHAINSLERYIKNEEQRFFIIDKQVYNLFVDKLEALAQKFDAKCIVIPSGETSKSFEHYHRTIEYLLSHQLTRQTCIVAIGGGATGDFAGFIAATLLRGVSFVQVPTTILAHDSSVGGKVGINSEHGKNLIGAFYRPKAVIYDLDFLETLPYSEILSGYAEVYKHALLNGEKSTKNIESNFTSNKVLQALKNLDYYLFEGIKTKLNIVVEDEKEKGKRKFLNLGHTFGHAIEYEHKIPHGHAVMIGILYQFIVANHLFETNYNIQHYINYMKKLKYPLSIIKQLHFEDTYHFMLLDKKNDYNGIQMVLLKNLGKPVVTHVDKDTLLSAFEELQSYFK.

NAD(+) contacts are provided by residues 66-71, 100-104, 124-125, K136, K145, and 163-166; these read SGETSK, GATGD, TT, and FLET. Zn(2+)-binding residues include E178, H242, and H256.

It belongs to the sugar phosphate cyclases superfamily. Dehydroquinate synthase family. It depends on NAD(+) as a cofactor. The cofactor is Co(2+). Requires Zn(2+) as cofactor.

The protein localises to the cytoplasm. The catalysed reaction is 7-phospho-2-dehydro-3-deoxy-D-arabino-heptonate = 3-dehydroquinate + phosphate. It participates in metabolic intermediate biosynthesis; chorismate biosynthesis; chorismate from D-erythrose 4-phosphate and phosphoenolpyruvate: step 2/7. Its function is as follows. Catalyzes the conversion of 3-deoxy-D-arabino-heptulosonate 7-phosphate (DAHP) to dehydroquinate (DHQ). In Staphylococcus epidermidis (strain ATCC 35984 / DSM 28319 / BCRC 17069 / CCUG 31568 / BM 3577 / RP62A), this protein is 3-dehydroquinate synthase.